The chain runs to 197 residues: Small ribosomal subunit protein uS4 (197 aa).

An S4 RNA-binding domain is found at 88 to 150 (SRLDNLVYRM…AKSLEIILDN (63 aa)).

This sequence belongs to the universal ribosomal protein uS4 family. Part of the 30S ribosomal subunit. Contacts protein S5. The interaction surface between S4 and S5 is involved in control of translational fidelity.

In terms of biological role, one of the primary rRNA binding proteins, it binds directly to 16S rRNA where it nucleates assembly of the body of the 30S subunit. With S5 and S12 plays an important role in translational accuracy. The protein is Small ribosomal subunit protein uS4 of Azobacteroides pseudotrichonymphae genomovar. CFP2.